A 64-amino-acid chain; its full sequence is Fatty acid synthase (64 aa).

In terms of domain architecture, Carrier spans A1–L64. Position 38 is an O-(pantetheine 4'-phosphoryl)serine; alternate (S38). S38 carries the phosphoserine; alternate modification.

In terms of assembly, homodimer which is arranged in a head to tail fashion. Interacts with CEACAM1; this interaction is insulin and phosphorylation-dependent; reduces fatty-acid synthase activity.

The protein localises to the cytoplasm. Its subcellular location is the melanosome. It carries out the reaction acetyl-CoA + n malonyl-CoA + 2n NADPH + 2n H(+) = a long-chain fatty acid + (n+1) CoA + n CO2 + 2n NADP(+).. Functionally, fatty acid synthetase catalyzes the formation of long-chain fatty acids from acetyl-CoA, malonyl-CoA and NADPH. This multifunctional protein has 7 catalytic activities as an acyl carrier protein. The chain is Fatty acid synthase (FASN) from Oryctolagus cuniculus (Rabbit).